The following is a 341-amino-acid chain: MFNQNSPIISVEQLNKEIANHRILHRISFSVYPGEIVGIIGHSGSGKSTLLRCLDFLIEPTSGSISIAGFHTSSPIEKISRTAFAKRVAYVSQSCGLFLAKTVFENIAYPLKIRCPEMTKALIEEKVDDVLHFFNLYERKHAYPSRLSGGQKQKVAIAIAIVSDPRVLLCDEITSALDPRSTEDVVDKLSQLNEERGITQVFVSHEIEIVKKLCCQTLVMHQGSIEESGPTEQLFLNPQSAITEELFHMQSIAKGIYEHGENEEILRLGFPKGLAVQGMISQLIQSGGISINILSGDIHLFRKTPLGFLIVALSGGKEQRDWAKSSLREKGVIVKQFQKSR.

The region spanning 9 to 247 is the ABC transporter domain; sequence ISVEQLNKEI…PQSAITEELF (239 aa). 41–48 is an ATP binding site; that stretch reads GHSGSGKS.

It belongs to the ABC transporter superfamily. Methionine importer (TC 3.A.1.24) family. In terms of assembly, the complex is composed of two ATP-binding proteins (MetN), two transmembrane proteins (MetI) and a solute-binding protein (MetQ).

It localises to the cell inner membrane. The catalysed reaction is L-methionine(out) + ATP + H2O = L-methionine(in) + ADP + phosphate + H(+). It carries out the reaction D-methionine(out) + ATP + H2O = D-methionine(in) + ADP + phosphate + H(+). Functionally, part of the ABC transporter complex MetNIQ involved in methionine import. Responsible for energy coupling to the transport system. This is Methionine import ATP-binding protein MetN from Chlamydia abortus (strain DSM 27085 / S26/3) (Chlamydophila abortus).